Here is a 466-residue protein sequence, read N- to C-terminus: Glycosyl hydrolase family 109 protein (466 aa).

Residues 1-30 (MENTRRSFLKKVSAAGIGAAGLAMAGNAGA) constitute a signal peptide (tat-type signal). NAD(+) contacts are provided by residues 59–60 (SR), D81, 130–133 (WEWH), 151–152 (EV), and N180. Y209 lines the substrate pocket. 241-245 (AEAQW) serves as a coordination point for NAD(+). Substrate-binding positions include R246, 258 to 261 (YPTH), and Y340. Residue Y258 coordinates NAD(+).

It belongs to the Gfo/Idh/MocA family. Glycosyl hydrolase 109 subfamily. Requires NAD(+) as cofactor. In terms of processing, predicted to be exported by the Tat system. The position of the signal peptide cleavage has not been experimentally proven.

In terms of biological role, glycosidase. This chain is Glycosyl hydrolase family 109 protein, found in Parabacteroides distasonis (strain ATCC 8503 / DSM 20701 / CIP 104284 / JCM 5825 / NCTC 11152).